A 1430-amino-acid chain; its full sequence is Transport and Golgi organization protein 1 (1430 aa).

A signal peptide spans 1 to 34 (MRLTNEKATMQPQLSDLALVLGLLICCLPTLTWA). Residues 35–796 (ATLSDKRLCA…ADKLVDHSQL (762 aa)) are Extracellular-facing. In terms of domain architecture, SH3 spans 50-112 (QIISMGIAKI…NKDFIMEKKI (63 aa)). Disordered stretches follow at residues 253–272 (QEEP…PPLP), 284–303 (DFDY…SQDN), 318–362 (ESIE…SLPT), 445–524 (SDAE…DQQK), and 568–673 (EEAE…TDNH). Positions 284 to 296 (DFDYGDDETDDDS) are enriched in acidic residues. 3 stretches are compositionally biased toward basic and acidic residues: residues 331–357 (KKTD…KQED), 497–524 (LQEE…DQQK), and 568–588 (EEAE…RSSE). Residues 494-620 (YKQLQEEQEK…QSNEIVDNNN (127 aa)) adopt a coiled-coil conformation. Positions 594–621 (LSVQEANMQQLNDSVDSQSNEIVDNNNR) are enriched in polar residues. The span at 640–651 (HPSTASHTTPTP) shows a compositional bias: low complexity. Residues 797–817 (LLCVVIAAISSLFFMFAYYCF) form a helical membrane-spanning segment. Residues 818–1430 (CNSSQEGALL…SATSRPYSEV (613 aa)) lie on the Cytoplasmic side of the membrane. 2 positions are modified to phosphoserine: Ser-865 and Ser-868. A coiled-coil region spans residues 869-1245 (NDMVADLKKQ…SLRRKLTTMA (377 aa)). A compositionally biased stretch (low complexity) spans 1105–1114 (SQLQQSSQDV). 2 disordered regions span residues 1105 to 1126 (SQLQ…QSER) and 1312 to 1430 (LPPT…YSEV). Residues 1115–1126 (EQLKQDFNQSER) are compositionally biased toward basic and acidic residues. Positions 1321–1334 (RPPPLGRMRSPPPS) are enriched in pro residues. The segment covering 1336 to 1346 (RGDRDRERYSD) has biased composition (basic and acidic residues). Residues Ser-1345 and Ser-1348 each carry the phosphoserine modification. Acidic residues predominate over residues 1348-1361 (SDYDDYDDDEEDDR). The span at 1364 to 1380 (DRRRRHSGSWGRRHRGS) shows a compositional bias: basic residues. The span at 1387–1402 (TYRSLSPSDSRYNYND) shows a compositional bias: polar residues. A phosphoserine mark is found at Ser-1390 and Ser-1392. A compositionally biased stretch (pro residues) spans 1408 to 1417 (SPPPSPPPVP). Positions 1420-1430 (RSATSRPYSEV) are enriched in polar residues.

This sequence belongs to the MIA/OTOR family. Tango1 subfamily.

It is found in the golgi apparatus membrane. Its subcellular location is the golgi apparatus. It localises to the trans-Golgi network. Its function is as follows. Required for protein secretion. May participate in cargo loading by binding to COPII coat subunits and guiding SH3-bound proteins into a growing carrier. At basal transitional ER sites in follicle epithelial cells, mediates the exit of basal membrane protein such as vkg, LanB1 and Trol, from the endoplasmic reticulum (ER) to basal Golgi clusters. In Drosophila melanogaster (Fruit fly), this protein is Transport and Golgi organization protein 1.